A 96-amino-acid chain; its full sequence is Large ribosomal subunit protein eL14 (96 aa).

It belongs to the eukaryotic ribosomal protein eL14 family.

The chain is Large ribosomal subunit protein eL14 from Saccharolobus islandicus (strain Y.N.15.51 / Yellowstone #2) (Sulfolobus islandicus).